Here is a 397-residue protein sequence, read N- to C-terminus: Succinate--CoA ligase [ADP-forming] subunit beta (397 aa).

Residues 9–254 (KALLAQYGAP…ETEEDPKELA (246 aa)) form the ATP-grasp domain. Residues Lys-46, 53–55 (GRG), Glu-109, Ser-112, and Glu-117 contribute to the ATP site. The Mg(2+) site is built by Asn-209 and Asp-223. Substrate is bound by residues Asn-274 and 331 to 333 (GIM).

This sequence belongs to the succinate/malate CoA ligase beta subunit family. Heterotetramer of two alpha and two beta subunits. Requires Mg(2+) as cofactor.

The catalysed reaction is succinate + ATP + CoA = succinyl-CoA + ADP + phosphate. The enzyme catalyses GTP + succinate + CoA = succinyl-CoA + GDP + phosphate. It functions in the pathway carbohydrate metabolism; tricarboxylic acid cycle; succinate from succinyl-CoA (ligase route): step 1/1. Its function is as follows. Succinyl-CoA synthetase functions in the citric acid cycle (TCA), coupling the hydrolysis of succinyl-CoA to the synthesis of either ATP or GTP and thus represents the only step of substrate-level phosphorylation in the TCA. The beta subunit provides nucleotide specificity of the enzyme and binds the substrate succinate, while the binding sites for coenzyme A and phosphate are found in the alpha subunit. This chain is Succinate--CoA ligase [ADP-forming] subunit beta, found in Jannaschia sp. (strain CCS1).